The primary structure comprises 517 residues: Beta-glucosidase 1 (517 aa).

The first 22 residues, 1–22 (MEDVLTLITMIVLLLLAFHGFG), serve as a signal peptide directing secretion. A beta-D-glucoside is bound by residues glutamine 48, histidine 145, and 190–191 (NE). Glutamate 191 functions as the Proton donor in the catalytic mechanism. An intrachain disulfide couples cysteine 210 to cysteine 217. N-linked (GlcNAc...) asparagine glycans are attached at residues asparagine 216 and asparagine 221. 2 residues coordinate a beta-D-glucoside: tyrosine 333 and glutamate 406. Glutamate 406 serves as the catalytic Nucleophile. Asparagine 441 carries N-linked (GlcNAc...) asparagine glycosylation. A beta-D-glucoside contacts are provided by tryptophan 451 and phenylalanine 467. Residues asparagine 473 and asparagine 512 are each glycosylated (N-linked (GlcNAc...) asparagine).

Belongs to the glycosyl hydrolase 1 family.

The enzyme catalyses Hydrolysis of terminal, non-reducing beta-D-glucosyl residues with release of beta-D-glucose.. The polypeptide is Beta-glucosidase 1 (Arabidopsis thaliana (Mouse-ear cress)).